The chain runs to 834 residues: Striatin-interacting protein 2 (834 aa).

The interval 1–48 (MEDPAAPGTGGPPANGNGNGGGKGKQAAPKGREAFRSQRRESEGSVDC) is disordered. Positions 8 to 24 (GTGGPPANGNGNGGGKG) are enriched in gly residues. Positions 30–43 (KGREAFRSQRRESE) are enriched in basic and acidic residues. Serine 318, serine 329, and serine 354 each carry phosphoserine. Residues 321-345 (SYTLDLGESQLAPPPSKLRGRRGSR) are disordered. Residues 360–382 (ERDLFKTEEPATEEEEESAGDGE) are disordered. Residues 369 to 379 (PATEEEEESAG) are compositionally biased toward acidic residues.

This sequence belongs to the STRIP family. In terms of assembly, part of the core of STRIPAK complexes composed of PP2A catalytic and scaffolding subunits, the striatins (PP2A regulatory subunits), the striatin-associated proteins MOB4, STRIP1 and STRIP2, PDCD10 and members of the STE20 kinases, such as STK24 and STK26. Interacts with CTTNBP2NL.

It is found in the cytoplasm. Plays a role in the regulation of cell morphology and cytoskeletal organization. Required in the control of cell shape. Calmodulin-binding scaffolding protein which is the center of the striatin-interacting phosphatase and kinase (STRIPAK) complexes. STRIPAK complexes have critical roles in protein (de)phosphorylation and are regulators of multiple signaling pathways including Hippo, MAPK, nuclear receptor and cytoskeleton remodeling. Different types of STRIPAK complexes are involved in a variety of biological processes such as cell growth, differentiation, apoptosis, metabolism and immune regulation. This chain is Striatin-interacting protein 2, found in Homo sapiens (Human).